Consider the following 429-residue polypeptide: Serine--tRNA ligase (429 aa).

Position 235–237 (235–237) interacts with L-serine; it reads TAE. 266-268 lines the ATP pocket; the sequence is RSE. Position 289 (Glu289) interacts with L-serine. ATP is bound at residue 353–356; that stretch reads EISS. Residue Ser389 coordinates L-serine.

This sequence belongs to the class-II aminoacyl-tRNA synthetase family. Type-1 seryl-tRNA synthetase subfamily. As to quaternary structure, homodimer. The tRNA molecule binds across the dimer.

The protein localises to the cytoplasm. The catalysed reaction is tRNA(Ser) + L-serine + ATP = L-seryl-tRNA(Ser) + AMP + diphosphate + H(+). It catalyses the reaction tRNA(Sec) + L-serine + ATP = L-seryl-tRNA(Sec) + AMP + diphosphate + H(+). It functions in the pathway aminoacyl-tRNA biosynthesis; selenocysteinyl-tRNA(Sec) biosynthesis; L-seryl-tRNA(Sec) from L-serine and tRNA(Sec): step 1/1. In terms of biological role, catalyzes the attachment of serine to tRNA(Ser). Is also able to aminoacylate tRNA(Sec) with serine, to form the misacylated tRNA L-seryl-tRNA(Sec), which will be further converted into selenocysteinyl-tRNA(Sec). In Actinobacillus succinogenes (strain ATCC 55618 / DSM 22257 / CCUG 43843 / 130Z), this protein is Serine--tRNA ligase.